The following is a 929-amino-acid chain: Diacylglycerol kinase zeta (929 aa).

Positions 1 to 14 (MEPRDPSPEARSSD) are enriched in basic and acidic residues. 2 disordered regions span residues 1–46 (MEPR…RRFP) and 59–80 (KSGL…GESE). Residues 15–24 (SESASASSSG) are compositionally biased toward low complexity. Residues 25-37 (SERDADPEPDKAP) are compositionally biased toward basic and acidic residues. 2 Phorbol-ester/DAG-type zinc fingers span residues 98–153 (HIWF…NFRC) and 173–231 (HHWV…EEPC). The interval 257 to 281 (KASKKKKRASFKRRSSKKGPEEGRW) is disordered. The span at 258 to 273 (ASKKKKRASFKRRSSK) shows a compositional bias: basic residues. The segment at 279-417 (GRWRPFIIRP…HVEEGNVVQL (139 aa)) is mediates interaction with RASGRP1. Residues 292 to 426 (PLMKPLLVFV…LDRWDLRAEP (135 aa)) enclose the DAGKc domain. Residues 362 to 370 (LSTLDQLRL) carry the Nuclear export signal motif. The segment at 421-441 (DLRAEPNPEAGPEERDDGATD) is disordered. At serine 706 the chain carries Phosphoserine. Residues 760-783 (ARPDLPTPTSPLPASPCSPTPGSL) are disordered. The segment covering 764 to 778 (LPTPTSPLPASPCSP) has biased composition (pro residues). A Phosphoserine modification is found at serine 782. ANK repeat units lie at residues 823-853 (QSRT…EILD) and 858-887 (NGET…SLMK). A PDZ-binding motif is present at residues 925 to 929 (QETAV).

Belongs to the eukaryotic diacylglycerol kinase family. Interacts (via PDZ-binding motif) with the PDZ domain of the syntrophin SNTG1 and that of SNX27. Interacts with IRS1 in the absence of insulin; insulin stimulation decreases this interaction. Found in a ternary complex with IRS1 and PIP5K1A in the absence of insulin. Interacts with PIP5K1A. Forms a signaling complex with RASGRP1 and HRAS.

Its subcellular location is the nucleus. It localises to the cytoplasm. It is found in the cytosol. The protein resides in the cell membrane. The protein localises to the cell projection. Its subcellular location is the lamellipodium. It catalyses the reaction a 1,2-diacyl-sn-glycerol + ATP = a 1,2-diacyl-sn-glycero-3-phosphate + ADP + H(+). The catalysed reaction is a 1-O-alkyl-sn-glycerol + ATP = a 1-O-alkyl-sn-glycero-3-phosphate + ADP + H(+). It carries out the reaction 1-O-alkyl-2-acyl-sn-glycerol + ATP = 1-O-alkyl-2-acyl-sn-glycero-3-phosphate + ADP + H(+). The enzyme catalyses 1,2-didecanoyl-sn-glycerol + ATP = 1,2-didecanoyl-sn-glycero-3-phosphate + ADP + H(+). It catalyses the reaction 1,2-ditetradecanoyl-sn-glycerol + ATP = 1,2-ditetradecanoyl-sn-glycero-3-phosphate + ADP + H(+). The catalysed reaction is 1-hexadecanoyl-2-(9Z-octadecenoyl)-sn-glycerol + ATP = 1-hexadecanoyl-2-(9Z-octadecenoyl)-sn-glycero-3-phosphate + ADP + H(+). It carries out the reaction 1-hexadecanoyl-2-(5Z,8Z,11Z,14Z-eicosatetraenoyl)-sn-glycerol + ATP = 1-hexadecanoyl-2-(5Z,8Z,11Z,14Z-eicosatetraenoyl)-sn-glycero-3-phosphate + ADP + H(+). The enzyme catalyses 1-octadecanoyl-2-(9Z-octadecenoyl)-sn-glycerol + ATP = 1-octadecanoyl-2-(9Z-octadecenoyl)-sn-glycero-3-phosphate + ADP + H(+). It catalyses the reaction 1-octadecanoyl-2-(5Z,8Z,11Z,14Z-eicosatetraenoyl)-sn-glycerol + ATP = 1-octadecanoyl-2-(5Z,8Z,11Z,14Z-eicosatetraenoyl)-sn-glycero-3-phosphate + ADP + H(+). The catalysed reaction is 1-octadecanoyl-2-(4Z,7Z,10Z,13Z,16Z,19Z-docosahexaenoyl)-sn-glycerol + ATP = 1-octadecanoyl-2-(4Z,7Z,10Z,13Z,16Z,19Z-docosahexaenoyl)-sn-glycero-3-phosphate + ADP + H(+). It carries out the reaction 1,2-di-(9Z-octadecenoyl)-sn-glycerol + ATP = 1,2-di-(9Z-octadecenoyl)-sn-glycero-3-phosphate + ADP + H(+). The enzyme catalyses 1-(9Z-octadecenoyl)-2-hexadecanoyl-sn-glycerol + ATP = 1-(9Z)-octadecenoyl-2-hexadecanoyl-sn-glycero-3-phosphate + ADP + H(+). It catalyses the reaction 1-eicosanoyl-2-(5Z,8Z,11Z,14Z)-eicosatetraenoyl-sn-glycerol + ATP = 1-eicosanoyl-2-(5Z,8Z,11Z,14Z)-eicosatetraenoyl-sn-glycero-3-phosphate + ADP + H(+). The catalysed reaction is 1,2-di-(5Z,8Z,11Z,14Z)-eicosatetraenoyl-sn-glycerol + ATP = 1,2-di-(5Z,8Z,11Z,14Z)-eicosatetraenoyl-sn-glycero-3-phosphate + ADP + H(+). It carries out the reaction 1-O-hexadecyl-2-acetyl-sn-glycerol + ATP = 1-O-hexadecyl-2-acetyl-sn-glycero-3-phosphate + ADP + H(+). The enzyme catalyses 1-O-hexadecyl-2-(5Z,8Z,11Z,14Z-eicosatetraenoyl)-sn-glycerol + ATP = 1-O-hexadecyl-2-(5Z,8Z,11Z,14Z-eicosatetraenoyl)-sn-glycero-3-phosphate + ADP + H(+). It catalyses the reaction 1-O-hexadecyl-2-(9Z-octadecenoyl)-sn-glycerol + ATP = 1-O-hexadecyl-2-(9Z-octadecenoyl)-sn-glycero-3-phosphate + ADP + H(+). The catalysed reaction is 1-O-hexadecyl-sn-glycerol + ATP = 1-O-hexadecyl-sn-glycero-3-phosphate + ADP + H(+). The protein operates within lipid metabolism; glycerolipid metabolism. Diacylglycerol kinase that converts diacylglycerol/DAG into phosphatidic acid/phosphatidate/PA and regulates the respective levels of these two bioactive lipids. Thereby, acts as a central switch between the signaling pathways activated by these second messengers with different cellular targets and opposite effects in numerous biological processes. Also plays an important role in the biosynthesis of complex lipids. Does not exhibit an acyl chain-dependent substrate specificity among diacylglycerol species. Can also phosphorylate 1-alkyl-2-acylglycerol in vitro but less efficiently and with a preference for alkylacylglycerols containing an arachidonoyl group. The biological processes it is involved in include T cell activation since it negatively regulates T-cell receptor signaling which is in part mediated by diacylglycerol. By generating phosphatidic acid, stimulates PIP5KIA activity which regulates actin polymerization. Through the same mechanism could also positively regulate insulin-induced translocation of SLC2A4 to the cell membrane. Regulates RASGRP1 activity. The sequence is that of Diacylglycerol kinase zeta from Rattus norvegicus (Rat).